A 542-amino-acid chain; its full sequence is La-related protein 7 homolog (542 aa).

The region spanning 112–239 is the HTH La-type RNA-binding domain; sequence VAEELDIKES…KRRFPFNLEQ (128 aa). The region spanning 247 to 335 is the RRM domain; the sequence is RTLYIDFLPP…GSIRIITYKK (89 aa). The region spanning 374–542 is the xRRM domain; sequence EIKQNCLIKI…KQNITQNYNK (169 aa).

This sequence belongs to the LARP7 family. Component of the telomerase holoenzyme complex, composed of the catalytic core (the catalytic subunit TERT, the telomerase RNA template component TER and TAP65/p65), which is associated with two heterotrimeric subcomplexes: (i) the replication protein A (RPA)-related subcomplex, composed of TEB1, RPA2/TEB2 and RPA3/TEB3 and (ii) the CST-like subcomplex, composed of TAP75/p75, TAP45/p45 and TAP19/p19. TEB1 and the CST-like subcomplex are tethered to the catalytic core by TAP50/p50.

The protein resides in the chromosome. Its subcellular location is the telomere. Its function is as follows. RNA-binding protein required for assembly of the holoenzyme telomerase ribonucleoprotein (RNP) complex. Telomerase is an essential ribonucleoprotein enzyme that copies new telomeric repeats onto chromosome ends by repetitively synthesizing the short telomere-repeat sequence 5'-TTGGGG-3' using an RNA template component TER. TAP65/p65 specifically binds telomerase RNA template TER and is required for biogenesis and placement of the TER stem-terminus element: TAP65/p65 first protects the 3'-end of TER from degradation and acts as a chaperone to correctly fold TER for protein binding; it then bends TER stem-loop IV to position it for interaction of stem-loop IV with catalytic TERT RNA-binding domain. The protein is La-related protein 7 homolog of Tetrahymena thermophila (strain SB210).